The chain runs to 131 residues: Superoxide dismutase [Ni] (131 aa).

The propeptide occupies 1–14; it reads MLSRLFAPKVTVSA. Residues His-15, Cys-16, and Cys-20 each contribute to the Ni(2+) site.

It belongs to the nickel superoxide dismutase family. In terms of assembly, homohexamer. The hexameric protein has a roughly the shape of a hollow sphere with an outer diameter of 60 angstroms and a large interior cavity. Ni(2+) is required as a cofactor.

Its subcellular location is the cytoplasm. It catalyses the reaction 2 superoxide + 2 H(+) = H2O2 + O2. The protein is Superoxide dismutase [Ni] (sodN) of Streptomyces coelicolor (strain ATCC BAA-471 / A3(2) / M145).